We begin with the raw amino-acid sequence, 619 residues long: Laccase (619 aa).

Positions 1–21 (MKFLGIAALVAGLLAPSLVLG) are cleaved as a signal peptide. Positions 22–49 (APAPGTEGVNLLTPVDKRQDSQAERYGG) are excised as a propeptide. A disulfide bridge links cysteine 55 with cysteine 63. 2 Plastocyanin-like domains span residues 84–207 (TRRY…IVIN) and 216–373 (VDLG…LPTN). Asparagine 139 is a glycosylation site (N-linked (GlcNAc...) asparagine). Positions 144, 146, 189, and 191 each coordinate Cu cation. Disulfide bonds link cysteine 165–cysteine 586 and cysteine 349–cysteine 383. N-linked (GlcNAc...) asparagine glycans are attached at residues asparagine 282, asparagine 295, and asparagine 340. Asparagine 422 and asparagine 444 each carry an N-linked (GlcNAc...) asparagine glycan. The Plastocyanin-like 3 domain occupies 431–566 (NKPVLEYVLT…GGLSNQFLER (136 aa)). Histidine 477, histidine 480, histidine 482, histidine 548, cysteine 549, histidine 550, and histidine 554 together coordinate Cu cation. The propeptide occupies 607-619 (RSGVKAREVKMKW).

Belongs to the multicopper oxidase family. The cofactor is Cu cation.

It is found in the secreted. The enzyme catalyses 4 hydroquinone + O2 = 4 benzosemiquinone + 2 H2O. Functionally, lignin degradation and detoxification of lignin-derived products. The sequence is that of Laccase (lacc) from Neurospora crassa (strain ATCC 24698 / 74-OR23-1A / CBS 708.71 / DSM 1257 / FGSC 987).